We begin with the raw amino-acid sequence, 362 residues long: Melatonin receptor type 1B (362 aa).

Topologically, residues 1–42 are extracellular; sequence MSENGSFANCCEAGGWAVRPGWSGAGSARPSRTPRPPWVAPA. N4 carries an N-linked (GlcNAc...) asparagine glycan. A helical transmembrane segment spans residues 43–63; sequence LSAVLIVTTAVDVVGNLLVIL. Over 64 to 76 the chain is Cytoplasmic; that stretch reads SVLRNRKLRNAGN. Residues 77-97 form a helical membrane-spanning segment; it reads LFLVSLALADLVVAFYPYPLI. The Extracellular portion of the chain corresponds to 98-115; the sequence is LVAIFYDGWALGEEHCKA. C113 and C190 are joined by a disulfide. The chain crosses the membrane as a helical span at residues 116-136; that stretch reads SAFVMGLSVIGSVFNITAIAI. Over 137–155 the chain is Cytoplasmic; the sequence is NRYCYICHSMAYHRIYRRW. A helical membrane pass occupies residues 156-176; the sequence is HTPLHICLIWLLTVVALLPNF. Melatonin-binding residues include N175 and Q194. The Extracellular segment spans residues 177–200; the sequence is FVGSLEYDPRIYSCTFIQTASTQY. A helical membrane pass occupies residues 201 to 221; sequence TAAVVVIHFLLPIAVVSFCYL. The Cytoplasmic portion of the chain corresponds to 222–253; that stretch reads RIWVLVLQARRKAKPESRLCLKPSDLRSFLTM. The chain crosses the membrane as a helical span at residues 254-274; it reads FVVFVIFAICWAPLNCIGLAV. Topologically, residues 275–287 are extracellular; the sequence is AINPQEMAPQIPE. The chain crosses the membrane as a helical span at residues 288 to 308; that stretch reads GLFVTSYLLAYFNSCLNAIVY. Over 309 to 362 the chain is Cytoplasmic; that stretch reads GLLNQNFRREYKRILLALWNPRHCIQDASKGSHAEGLQSPAPPIIGVQHQADAL.

This sequence belongs to the G-protein coupled receptor 1 family. As to quaternary structure, interacts with GPR61, GPR62 and GPR135. As to expression, expressed in retina and less in brain and hippocampus.

Its subcellular location is the cell membrane. Functionally, high affinity receptor for melatonin. Likely to mediate the reproductive and circadian actions of melatonin. The activity of this receptor is mediated by pertussis toxin sensitive G proteins that inhibit adenylate cyclase activity. This chain is Melatonin receptor type 1B (MTNR1B), found in Homo sapiens (Human).